A 234-amino-acid polypeptide reads, in one-letter code: Preflagellin peptidase (234 aa).

A topological domain (cytoplasmic) is located at residue Met-1. The helical transmembrane segment at Ile-2–Asp-18 threads the bilayer. Residues Leu-19 to Glu-23 lie on the Extracellular side of the membrane. A helical membrane pass occupies residues Ile-24 to Ile-46. The Cytoplasmic segment spans residues Ser-47–Asp-49. A helical membrane pass occupies residues Met-50–Leu-72. Residues Leu-73–Gly-78 lie on the Extracellular side of the membrane. The chain crosses the membrane as a helical span at residues Asp-79–Leu-89. Residues Ile-90–Leu-110 are Cytoplasmic-facing. A helical transmembrane segment spans residues Pro-111–Arg-139. The Extracellular portion of the chain corresponds to Gly-140–Pro-205. The helical transmembrane segment at Phe-206–Thr-217 threads the bilayer. The Cytoplasmic segment spans residues Ser-218–Leu-234.

Belongs to the peptidase A24 family. Archaeal preflagellin peptidase subfamily.

The protein resides in the cell membrane. The catalysed reaction is Cleaves the signal peptide of 3 to 12 amino acids from the N-terminal of preflagellin, usually at Arg-Gly-|- or Lys-Gly-|-, to release flagellin.. Its function is as follows. Cleaves the N-terminal leader peptide from preflagellins. The protein is Preflagellin peptidase (flaK) of Methanocaldococcus jannaschii (strain ATCC 43067 / DSM 2661 / JAL-1 / JCM 10045 / NBRC 100440) (Methanococcus jannaschii).